We begin with the raw amino-acid sequence, 204 residues long: MPASQRLRLICGVDEAGRGPLCGPVVAAAVILDPARPIDGLADSKKLTERARDRLAPLIRERALAWAVAEASVEEIDRLNILHATMLAMQRAVSALSVLPGEVLIDGNRCPTLAVPARAVVGGDASEPAISAASILAKTVRDAGMKALHEQYPHYGLADHKGYPTAGHLAALRRHGIADFYRRSFGPVRELLQNPPLWVEEESA.

One can recognise an RNase H type-2 domain in the interval 8–197; that stretch reads RLICGVDEAG…VRELLQNPPL (190 aa). Positions 14, 15, and 106 each coordinate a divalent metal cation.

It belongs to the RNase HII family. Requires Mn(2+) as cofactor. The cofactor is Mg(2+).

The protein resides in the cytoplasm. It catalyses the reaction Endonucleolytic cleavage to 5'-phosphomonoester.. In terms of biological role, endonuclease that specifically degrades the RNA of RNA-DNA hybrids. In Azoarcus sp. (strain BH72), this protein is Ribonuclease HII.